Reading from the N-terminus, the 315-residue chain is tRNA pseudouridine synthase B (315 aa).

Histidine 42 provides a ligand contact to substrate. Residue aspartate 47 is the Nucleophile of the active site. 3 residues coordinate substrate: tyrosine 75, tyrosine 178, and leucine 199.

Belongs to the pseudouridine synthase TruB family. Type 1 subfamily.

The enzyme catalyses uridine(55) in tRNA = pseudouridine(55) in tRNA. Functionally, responsible for synthesis of pseudouridine from uracil-55 in the psi GC loop of transfer RNAs. This Photorhabdus laumondii subsp. laumondii (strain DSM 15139 / CIP 105565 / TT01) (Photorhabdus luminescens subsp. laumondii) protein is tRNA pseudouridine synthase B.